A 643-amino-acid chain; its full sequence is Transducer protein Htr8 (643 aa).

Helical transmembrane passes span 48–68 (VFVL…GTES), 79–99 (PGIL…LASI), 115–134 (VLAS…EAHF), 149–169 (WLPF…FGMI), and 184–204 (PWVW…ALMA). The HAMP domain occupies 273 to 326 (ERLEATANTYGAAMARAADGDLSVRLDPDVENDAMAAIAASFNEMLDETETTIR). Residues 345–581 (GVVEIEDASG…EAVSMIAEVS (237 aa)) form the Methyl-accepting transducer domain.

Belongs to the methyl-accepting chemotaxis (MCP) protein family. Methylated by CheR.

The protein localises to the cell membrane. Potentially involved in chemo- or phototactic signal transduction. The polypeptide is Transducer protein Htr8 (htr8) (Halobacterium salinarum (strain ATCC 29341 / DSM 671 / R1)).